The following is a 107-amino-acid chain: Ribonuclease P protein component 4 (107 aa).

4 residues coordinate Zn(2+): C62, C65, C87, and C90.

It belongs to the eukaryotic/archaeal RNase P protein component 4 family. As to quaternary structure, consists of a catalytic RNA component and at least 4-5 protein subunits. It depends on Zn(2+) as a cofactor.

The protein resides in the cytoplasm. It catalyses the reaction Endonucleolytic cleavage of RNA, removing 5'-extranucleotides from tRNA precursor.. Part of ribonuclease P, a protein complex that generates mature tRNA molecules by cleaving their 5'-ends. This is Ribonuclease P protein component 4 from Archaeoglobus fulgidus (strain ATCC 49558 / DSM 4304 / JCM 9628 / NBRC 100126 / VC-16).